Here is a 579-residue protein sequence, read N- to C-terminus: Proline--tRNA ligase (579 aa).

This sequence belongs to the class-II aminoacyl-tRNA synthetase family. ProS type 1 subfamily. As to quaternary structure, homodimer.

It is found in the cytoplasm. The enzyme catalyses tRNA(Pro) + L-proline + ATP = L-prolyl-tRNA(Pro) + AMP + diphosphate. Functionally, catalyzes the attachment of proline to tRNA(Pro) in a two-step reaction: proline is first activated by ATP to form Pro-AMP and then transferred to the acceptor end of tRNA(Pro). As ProRS can inadvertently accommodate and process non-cognate amino acids such as alanine and cysteine, to avoid such errors it has two additional distinct editing activities against alanine. One activity is designated as 'pretransfer' editing and involves the tRNA(Pro)-independent hydrolysis of activated Ala-AMP. The other activity is designated 'posttransfer' editing and involves deacylation of mischarged Ala-tRNA(Pro). The misacylated Cys-tRNA(Pro) is not edited by ProRS. The chain is Proline--tRNA ligase from Hamiltonella defensa subsp. Acyrthosiphon pisum (strain 5AT).